The chain runs to 190 residues: Pyridoxal 5'-phosphate synthase subunit PdxT (190 aa).

Glycine 46–serine 48 is an L-glutamine binding site. The Nucleophile role is filled by cysteine 78. L-glutamine contacts are provided by residues arginine 105 and isoleucine 138–arginine 139. Catalysis depends on charge relay system residues histidine 174 and glutamate 176.

This sequence belongs to the glutaminase PdxT/SNO family. In terms of assembly, in the presence of PdxS, forms a dodecamer of heterodimers. Only shows activity in the heterodimer.

The enzyme catalyses aldehydo-D-ribose 5-phosphate + D-glyceraldehyde 3-phosphate + L-glutamine = pyridoxal 5'-phosphate + L-glutamate + phosphate + 3 H2O + H(+). It catalyses the reaction L-glutamine + H2O = L-glutamate + NH4(+). It participates in cofactor biosynthesis; pyridoxal 5'-phosphate biosynthesis. Functionally, catalyzes the hydrolysis of glutamine to glutamate and ammonia as part of the biosynthesis of pyridoxal 5'-phosphate. The resulting ammonia molecule is channeled to the active site of PdxS. In Bifidobacterium longum (strain NCC 2705), this protein is Pyridoxal 5'-phosphate synthase subunit PdxT.